Reading from the N-terminus, the 1001-residue chain is Non-canonical poly(A) RNA polymerase protein Trf4-1 (1001 aa).

Composition is skewed to low complexity over residues 44 to 86 and 127 to 163; these read TING…NNSS and RNST…STNG. Disordered regions lie at residues 44-92 and 115-238; these read TING…PYLS and QQQQ…AGGA. Gly residues predominate over residues 164-178; the sequence is PGAGTGTSTGAGGTG. A compositionally biased stretch (low complexity) spans 179 to 216; the sequence is TNSPATTASSTAATTTGPATSMSDTSNNPPQSTTTPAS. Mn(2+)-binding residues include aspartate 328 and aspartate 330. A PAP-associated domain is found at 458-517; the sequence is NLGVLLLEFFELYGRRFNYMKIGISIKNGGRYMPKDELQRDMVDGHRPSLLCIEDPLTPG. Disordered stretches follow at residues 631 to 652, 687 to 740, 767 to 963, and 977 to 1001; these read PTAH…PGAH, QQQQ…AQEV, ASNS…LRGT, and SSES…RDER. A compositionally biased stretch (basic residues) spans 635–649; sequence GHSHAHSHSHGHAHP. 2 stretches are compositionally biased toward low complexity: residues 687 to 708 and 768 to 788; these read QQQQ…NQSQ and SNSW…TGSS. Residues 827–841 show a composition bias toward gly residues; it reads VGTGSNRGGGDGSGG. Polar residues predominate over residues 844–854; sequence YNQRNNHNSSG. Residues 855 to 880 are compositionally biased toward low complexity; the sequence is YYHQQYYVPPPMQQQLSKSNSSSNYH. Positions 881–912 are enriched in basic residues; that stretch reads QQHHHSHSHGNHSHRQQHHHQQQHHHQQRPQH. Low complexity-rich tracts occupy residues 932-955 and 977-992; these read SAGN…SNNS and SSES…SSRS.

This sequence belongs to the DNA polymerase type-B-like family. Requires Mn(2+) as cofactor.

Its subcellular location is the cytoplasm. The enzyme catalyses RNA(n) + ATP = RNA(n)-3'-adenine ribonucleotide + diphosphate. Functionally, involved in a post-transcriptional quality control mechanism limiting inappropriate expression of genetic information. Polyadenylation is required for the degradative activity of the exosome on several of its nuclear RNA substrates. Polyadenylates RNA processing and degradation intermediates of snRNAs and mRNAs. The polypeptide is Non-canonical poly(A) RNA polymerase protein Trf4-1 (Drosophila melanogaster (Fruit fly)).